The primary structure comprises 495 residues: Adenosylhomocysteinase (495 aa).

Positions 71, 156, and 218 each coordinate substrate. An NAD(+)-binding site is contributed by 219–221 (TTT). Residues K248 and D252 each contribute to the substrate site. NAD(+)-binding positions include N253, 282–287 (GYGDVG), E305, N340, 361–363 (IGH), and N409.

It belongs to the adenosylhomocysteinase family. NAD(+) is required as a cofactor.

It localises to the cytoplasm. It catalyses the reaction S-adenosyl-L-homocysteine + H2O = L-homocysteine + adenosine. It participates in amino-acid biosynthesis; L-homocysteine biosynthesis; L-homocysteine from S-adenosyl-L-homocysteine: step 1/1. In terms of biological role, may play a key role in the regulation of the intracellular concentration of adenosylhomocysteine. This Mycobacterium bovis (strain ATCC BAA-935 / AF2122/97) protein is Adenosylhomocysteinase.